The chain runs to 779 residues: Phosphoribosylformylglycinamidine synthase subunit PurL (779 aa).

Residue H52 is part of the active site. Y55 and K94 together coordinate ATP. E96 contacts Mg(2+). Substrate is bound by residues 97-100 (SHNH) and R119. H98 acts as the Proton acceptor in catalysis. Residue D120 coordinates Mg(2+). Substrate is bound at residue Q243. D271 serves as a coordination point for Mg(2+). Position 315 to 317 (315 to 317 (ESQ)) interacts with substrate. Residues N523 and G560 each coordinate ATP. N561 is a binding site for Mg(2+). Position 563 (S563) interacts with substrate.

This sequence belongs to the FGAMS family. In terms of assembly, monomer. Part of the FGAM synthase complex composed of 1 PurL, 1 PurQ and 2 PurS subunits.

The protein localises to the cytoplasm. The enzyme catalyses N(2)-formyl-N(1)-(5-phospho-beta-D-ribosyl)glycinamide + L-glutamine + ATP + H2O = 2-formamido-N(1)-(5-O-phospho-beta-D-ribosyl)acetamidine + L-glutamate + ADP + phosphate + H(+). Its pathway is purine metabolism; IMP biosynthesis via de novo pathway; 5-amino-1-(5-phospho-D-ribosyl)imidazole from N(2)-formyl-N(1)-(5-phospho-D-ribosyl)glycinamide: step 1/2. Its function is as follows. Part of the phosphoribosylformylglycinamidine synthase complex involved in the purines biosynthetic pathway. Catalyzes the ATP-dependent conversion of formylglycinamide ribonucleotide (FGAR) and glutamine to yield formylglycinamidine ribonucleotide (FGAM) and glutamate. The FGAM synthase complex is composed of three subunits. PurQ produces an ammonia molecule by converting glutamine to glutamate. PurL transfers the ammonia molecule to FGAR to form FGAM in an ATP-dependent manner. PurS interacts with PurQ and PurL and is thought to assist in the transfer of the ammonia molecule from PurQ to PurL. This Prochlorococcus marinus subsp. pastoris (strain CCMP1986 / NIES-2087 / MED4) protein is Phosphoribosylformylglycinamidine synthase subunit PurL.